The primary structure comprises 168 residues: Phosphopantetheine adenylyltransferase (168 aa).

Thr-9 contacts substrate. Residues 9 to 10 (TF) and His-17 each bind ATP. Lys-41, Leu-74, and Arg-88 together coordinate substrate. ATP is bound by residues 89-91 (GLR), Glu-99, and 124-130 (LQPIASR).

It belongs to the bacterial CoaD family. In terms of assembly, homohexamer. Requires Mg(2+) as cofactor.

The protein resides in the cytoplasm. It carries out the reaction (R)-4'-phosphopantetheine + ATP + H(+) = 3'-dephospho-CoA + diphosphate. It participates in cofactor biosynthesis; coenzyme A biosynthesis; CoA from (R)-pantothenate: step 4/5. Its function is as follows. Reversibly transfers an adenylyl group from ATP to 4'-phosphopantetheine, yielding dephospho-CoA (dPCoA) and pyrophosphate. This chain is Phosphopantetheine adenylyltransferase, found in Sphingopyxis alaskensis (strain DSM 13593 / LMG 18877 / RB2256) (Sphingomonas alaskensis).